We begin with the raw amino-acid sequence, 340 residues long: MTLVGNFSPLVLVGDSDRVEAETVGAYLDGWAGHDKVRLATANAIKAILSGAGRLVGSIARGYLPGDPGKLVGVNSDQDQQKSIDVGSHNLFVELLIAAGVASILSEEADLPVAGKADGLVAVAIDPLDGSGNVGLGAPLGTIFSIFPADVEEPFLQPGNRQIAAGYVSYGNSVDLGFSVGEGVIFATLDPVSGQFHITRRNVKLPERTSDLAFNASVQRHLSAGMQAYVNDAFLGKDGPRGRNFNMRWLGAAVGDMHRIMQRGGLFFYVNDSRPGYEKGRLRLVYEANPIAFLAREAGGKATDGSRPILDIVPQTYHERSALVFGVAEELDILGEYFVK.

Mg(2+) is bound by residues Glu-107, Asp-126, Leu-128, and Asp-129. Residue Asn-215 coordinates substrate. Position 287 (Glu-287) interacts with Mg(2+).

It belongs to the FBPase class 1 family. As to quaternary structure, homotetramer. The cofactor is Mg(2+).

The protein localises to the cytoplasm. It catalyses the reaction beta-D-fructose 1,6-bisphosphate + H2O = beta-D-fructose 6-phosphate + phosphate. The protein operates within carbohydrate biosynthesis; gluconeogenesis. The polypeptide is Fructose-1,6-bisphosphatase class 1 (Brucella canis (strain ATCC 23365 / NCTC 10854 / RM-666)).